Here is a 480-residue protein sequence, read N- to C-terminus: Ammonium transporter 3 member 3 (480 aa).

The next 11 helical transmembrane spans lie at 31 to 51, 59 to 79, 135 to 155, 169 to 189, 198 to 218, 233 to 253, 265 to 287, 292 to 314, 318 to 337, 361 to 381, and 407 to 427; these read SATL…GSIV, SAFM…VWAY, MVYF…GSLL, LWIT…GFLF, GGYV…YWVG, ILLV…FNGG, AVLN…DVFF, SVIG…AGLV, AAIV…MMVL, GFLG…SLFL, and LFVT…ISLI.

The protein belongs to the ammonia transporter channel (TC 1.A.11.2) family.

Its subcellular location is the membrane. Functionally, involved in ammonium transport. The chain is Ammonium transporter 3 member 3 (AMT3-3) from Oryza sativa subsp. japonica (Rice).